We begin with the raw amino-acid sequence, 416 residues long: Leu/Ile/Val-binding protein homolog 4 (416 aa).

Positions Met1–Ala26 are cleaved as a signal peptide.

It belongs to the leucine-binding protein family.

Component of an amino-acid transport system. The polypeptide is Leu/Ile/Val-binding protein homolog 4 (Brucella abortus (strain 2308)).